The following is a 525-amino-acid chain: MSNIHDHKILILDFGSQYTQLIARRIREIGVYCELWAWDVSEEQIKAFAPNGIILAGGPESVTADNSPRAPEYVFNAGVPVLGICYGMQTMSEQLGGKVIQGVGEGEFGYAQVEVQAASELFKSIEDAVSDSGKALLDVWMSHGDKVSEIPEGFVTVAKTDTCPYAAMANEEKRFYGVQFHPEVTHTRQGKRMLEHFALDICQCEANWKPSSIIEDAVARIKEQVGDDEVILGLSGGVDSSVVAMLLHRAIGSKLTCVFVDNGLLRLNEADQVLEMFGDHFGLNIVHVDAESRFLDALAGEAEPEAKRKIIGKVFVDIFDEESRKCVNAKWLAQGTIYPDVIESAGSATGKAHVIKSHHNVGGLPDDMELGLVEPLRELFKDEVRKIGLELGLPYNMLYRHPFPGPGLGVRVLGEVKKEYCDLLRRADAIFIEELHKADLYNKVSQAFTVFLPVRSVGVMGDGRKYDWVVSLRAVETIDFMTAHWAHLPYDFLGRVSNRIINEIDGISRVVYDISGKPPATIEWE.

A Glutamine amidotransferase type-1 domain is found at 8–207 (KILILDFGSQ…ALDICQCEAN (200 aa)). Residue C85 is the Nucleophile of the active site. Active-site residues include H181 and E183. Residues 208–400 (WKPSSIIEDA…LGLPYNMLYR (193 aa)) form the GMPS ATP-PPase domain. Residue 235 to 241 (SGGVDSS) coordinates ATP.

As to quaternary structure, homodimer.

It catalyses the reaction XMP + L-glutamine + ATP + H2O = GMP + L-glutamate + AMP + diphosphate + 2 H(+). The protein operates within purine metabolism; GMP biosynthesis; GMP from XMP (L-Gln route): step 1/1. Catalyzes the synthesis of GMP from XMP. This Shewanella loihica (strain ATCC BAA-1088 / PV-4) protein is GMP synthase [glutamine-hydrolyzing].